The chain runs to 113 residues: DNA-binding protein PTO0204 (113 aa).

This sequence belongs to the PDCD5 family.

The chain is DNA-binding protein PTO0204 from Picrophilus torridus (strain ATCC 700027 / DSM 9790 / JCM 10055 / NBRC 100828 / KAW 2/3).